The chain runs to 304 residues: UDP-N-acetylenolpyruvoylglucosamine reductase (304 aa).

An FAD-binding PCMH-type domain is found at 28–193; that stretch reads KTGGPADYLA…LTATFALTPG (166 aa). The active site involves arginine 172. Catalysis depends on serine 222, which acts as the Proton donor. Glutamate 292 is an active-site residue.

The protein belongs to the MurB family. The cofactor is FAD.

Its subcellular location is the cytoplasm. It carries out the reaction UDP-N-acetyl-alpha-D-muramate + NADP(+) = UDP-N-acetyl-3-O-(1-carboxyvinyl)-alpha-D-glucosamine + NADPH + H(+). It functions in the pathway cell wall biogenesis; peptidoglycan biosynthesis. Its function is as follows. Cell wall formation. This chain is UDP-N-acetylenolpyruvoylglucosamine reductase, found in Levilactobacillus brevis (strain ATCC 367 / BCRC 12310 / CIP 105137 / JCM 1170 / LMG 11437 / NCIMB 947 / NCTC 947) (Lactobacillus brevis).